The following is a 389-amino-acid chain: Probable nitrate transporter NarT (389 aa).

The next 12 membrane-spanning stretches (helical) occupy residues 14 to 34, 45 to 65, 69 to 89, 97 to 117, 139 to 159, 161 to 181, 211 to 231, 246 to 266, 268 to 288, 294 to 314, 331 to 351, and 353 to 373; these read TLSL…MPFI, ISII…PFGY, IVGA…PIFF, GMLM…SVGV, GNIG…IIGW, TTVR…FIFG, WYFI…NYLV, GVFI…GDKF, AVKV…ILGI, LFTV…GLIF, IVSM…TYVA, and LTGS…IALF.

Belongs to the major facilitator superfamily. Nitrate/nitrite porter (TC 2.A.1.8) family.

It localises to the cell membrane. In terms of biological role, probably required for nitrate uptake under anoxic conditions. Also possibly involved in excretion of nitrite produced by the dissimilatory reduction of nitrate. This chain is Probable nitrate transporter NarT (narT), found in Staphylococcus aureus (strain MRSA252).